The chain runs to 430 residues: tRNA(Ile)-lysidine synthase (430 aa).

21-26 is an ATP binding site; sequence SGGLDS.

The protein belongs to the tRNA(Ile)-lysidine synthase family.

It localises to the cytoplasm. The catalysed reaction is cytidine(34) in tRNA(Ile2) + L-lysine + ATP = lysidine(34) in tRNA(Ile2) + AMP + diphosphate + H(+). Its function is as follows. Ligates lysine onto the cytidine present at position 34 of the AUA codon-specific tRNA(Ile) that contains the anticodon CAU, in an ATP-dependent manner. Cytidine is converted to lysidine, thus changing the amino acid specificity of the tRNA from methionine to isoleucine. The chain is tRNA(Ile)-lysidine synthase from Salmonella choleraesuis (strain SC-B67).